A 604-amino-acid polypeptide reads, in one-letter code: Nuclear factor erythroid 2-related factor 2 (604 aa).

The short motif at 29–31 (DLG) is the DLG motif element. Position 40 is a phosphoserine; by PKC (Ser40). The ETGE motif signature appears at 79-82 (ETGE). Ser214 carries the phosphoserine modification. The disordered stretch occupies residues 334 to 447 (TVEFNDSDSG…VPFTKDKHSS (114 aa)). 2 stretches are compositionally biased toward polar residues: residues 340–352 (SDSG…SPSR) and 395–407 (PTHS…QPLS). Lys461, Lys471, and Lys486 each carry an N-linked (Glc) (glycation) lysine glycan. The bZIP domain maps to 496–559 (LIRDIRRRGK…HLLKRKLSTL (64 aa)). The N-linked (Glc) (glycation) arginine glycan is linked to Arg498. The tract at residues 498 to 517 (RDIRRRGKNKVAAQNCRKRK) is basic motif. The segment at 521–528 (IVELEQDL) is leucine-zipper. An N-linked (Glc) (glycation) arginine glycan is attached at Arg568. The disordered stretch occupies residues 570–604 (EDGKPYSPSEYSLQQTRDGNVFLVPKSKKPDTKKN). An N-linked (Glc) (glycation) lysine glycan is attached at Lys573. Residues 578 to 587 (SEYSLQQTRD) show a composition bias toward polar residues. Residues 590-595 (VFLVPK) form a mediates interaction with CHD6 and is necessary to activate transcription region. An N6-acetyllysine; by CREBBP mark is found at Lys595 and Lys598.

This sequence belongs to the bZIP family. CNC subfamily. Heterodimer; heterodimerizes with small Maf proteins. Interacts (via the bZIP domain) with MAFG and MAFK; required for binding to antioxidant response elements (AREs) on DNA. Interacts with KEAP1; the interaction is direct and promotes ubiquitination by the BCR(KEAP1) E3 ubiquitin ligase complex. Forms a ternary complex with PGAM5 and KEAP1. Interacts with EEF1D at heat shock promoter elements (HSE). Interacts via its leucine-zipper domain with the coiled-coil domain of PMF1. Interacts with CHD6; involved in activation of the transcription. Interacts with ESRRB; represses NFE2L2 transcriptional activity. Interacts with MOTS-c, a peptide produced by the mitochondrially encoded 12S rRNA MT-RNR1; the interaction occurs in the nucleus following metabolic stress. Ubiquitinated in the cytoplasm by the BCR(KEAP1) E3 ubiquitin ligase complex leading to its degradation. In response to oxidative stress, electrophile metabolites, such as sulforaphane, modify KEAP1, leading to inhibit activity of the BCR(KEAP1) complex, promoting NFE2L2/NRF2 nuclear accumulation and activity. In response to autophagy, the BCR(KEAP1) complex is inactivated. In terms of processing, phosphorylated by EIF2AK3/PERK following unfolded protein response (UPR), promoting dissociation from its cytoplasmic inhibitor KEAP1, followed by its translocation into the nucleus. Phosphorylation of Ser-40 by PKC in response to oxidative stress dissociates NFE2L2 from its cytoplasmic inhibitor KEAP1, promoting its translocation into the nucleus. Post-translationally, acetylation at Lys-595 and Lys-598 increases nuclear localization whereas deacetylation by SIRT1 enhances cytoplasmic presence. Glycation impairs transcription factor activity by preventing heterodimerization with small Maf proteins. Deglycation by FN3K restores activity.

The protein localises to the cytoplasm. Its subcellular location is the cytosol. It localises to the nucleus. In terms of biological role, transcription factor that plays a key role in the response to oxidative stress: binds to antioxidant response (ARE) elements present in the promoter region of many cytoprotective genes, such as phase 2 detoxifying enzymes, and promotes their expression, thereby neutralizing reactive electrophiles. In normal conditions, ubiquitinated and degraded in the cytoplasm by the BCR(KEAP1) complex. In response to oxidative stress, electrophile metabolites inhibit activity of the BCR(KEAP1) complex, promoting nuclear accumulation of NFE2L2/NRF2, heterodimerization with one of the small Maf proteins and binding to ARE elements of cytoprotective target genes. The NFE2L2/NRF2 pathway is also activated in response to selective autophagy: autophagy promotes interaction between KEAP1 and SQSTM1/p62 and subsequent inactivation of the BCR(KEAP1) complex, leading to NFE2L2/NRF2 nuclear accumulation and expression of cytoprotective genes. The NFE2L2/NRF2 pathway is also activated during the unfolded protein response (UPR), contributing to redox homeostasis and cell survival following endoplasmic reticulum stress. May also be involved in the transcriptional activation of genes of the beta-globin cluster by mediating enhancer activity of hypersensitive site 2 of the beta-globin locus control region. Also plays an important role in the regulation of the innate immune response. It is a critical regulator of the innate immune response and survival during sepsis by maintaining redox homeostasis and restraint of the dysregulation of pro-inflammatory signaling pathways like MyD88-dependent and -independent and TNF-alpha signaling. Suppresses macrophage inflammatory response by blocking pro-inflammatory cytokine transcription and the induction of IL6. Binds to the proximity of pro-inflammatory genes in macrophages and inhibits RNA Pol II recruitment. The inhibition is independent of the Nrf2-binding motif and reactive oxygen species level. Represses antiviral cytosolic DNA sensing by suppressing the expression of the adapter protein STING1 and decreasing responsiveness to STING1 agonists while increasing susceptibility to infection with DNA viruses. This is Nuclear factor erythroid 2-related factor 2 from Rattus norvegicus (Rat).